The following is a 411-amino-acid chain: F-box protein At4g19940 (411 aa).

The 47-residue stretch at 29–75 (RQPIPEIPFDLVIEILTRLPAKSLMRFKSVSKLWSSLICSRNFTNRL) folds into the F-box domain.

The protein is F-box protein At4g19940 of Arabidopsis thaliana (Mouse-ear cress).